The chain runs to 485 residues: Probable WRKY transcription factor 10 (485 aa).

Disordered stretches follow at residues 43-62 (IFPQ…QRSG) and 215-293 (ISIE…SKTQ). Positions 216–264 (SIEDSESEDGNKDDDDEDFQYEDEDEDQYDQDQDVDEDEEEEKDEDNVA) are enriched in acidic residues. A DNA-binding region (WRKY) is located at residues 301–366 (SDEDNPNDGY…YDGIHNHPSP (66 aa)). Zn(2+) is bound by residues Cys-332, Cys-337, His-361, and His-363. The segment at 358 to 417 (DGIHNHPSPPARRSNSSSRNRSAGATIPQNQNDRTSRLGRAPPTPTPPTPPPSSYTPEEM) is disordered. Low complexity predominate over residues 368-380 (ARRSNSSSRNRSA). Residues 399–411 (PPTPTPPTPPPSS) show a composition bias toward pro residues.

The protein belongs to the WRKY group I family. In terms of assembly, interacts with IKU1. As to expression, expressed in male gametophytes (pollen) and in the endosperm of fertilized ovules.

The protein resides in the nucleus. Transcription factor. Interacts specifically with the W box (5'-(T)TGAC[CT]-3'), a frequently occurring elicitor-responsive cis-acting element. Modulates seed size by negatively regulating the cellularization of syncytial endosperm. This is Probable WRKY transcription factor 10 (WRKY10) from Arabidopsis thaliana (Mouse-ear cress).